The primary structure comprises 312 residues: MIRNMKVLVIGAGNAGRPAARLLNHLNNRVLVNDVRELHELPLKAQKRIAEMEDEGVMFRFGGHSMEDILWADAVFISPNIPQDAPVRKMVREAGDLVHITTSDIGRTLNELIGLPMVGVAGTDGKTTTTNMIDHILSSRYRTVSFSSLQDSLVIEGLVELVVNGDIDDRDLAVFELPHGTIRMAEGLELSAGVVTNLTPDHMDEFSNYDEYIERNFSIKDLMAPGGVLALCGDDPVISSLLDDLEVENVVYGVGERRTVEFMGRRFMLSQYPGQGLRYRAEGTCRIHLHPECIRDTDSHLQHLRSPQLQET.

Residue 112–118 coordinates ATP; sequence LIGLPMV.

Belongs to the MurCDEF family.

This is an uncharacterized protein from Methanothermobacter thermautotrophicus (strain ATCC 29096 / DSM 1053 / JCM 10044 / NBRC 100330 / Delta H) (Methanobacterium thermoautotrophicum).